The chain runs to 182 residues: uncharacterized protein (182 aa).

2 disordered regions span residues 17–53 (AVSQ…QGSK) and 128–159 (DSLG…PKRS). Polar residues predominate over residues 42 to 53 (PQPQCPSAQGSK). Residues 129–138 (SLGSSASSSS) show a composition bias toward low complexity.

This is an uncharacterized protein from Homo sapiens (Human).